A 256-amino-acid chain; its full sequence is uncharacterized protein (256 aa).

This is an uncharacterized protein from Treponema pallidum (strain Nichols).